The sequence spans 198 residues: Recombination protein RecR (198 aa).

A C4-type zinc finger spans residues 57–72 (CSICGNLTDDDPCHIC). The Toprim domain maps to 80–175 (ETILVVEASK…KVTRLARGLA (96 aa)).

This sequence belongs to the RecR family.

In terms of biological role, may play a role in DNA repair. It seems to be involved in an RecBC-independent recombinational process of DNA repair. It may act with RecF and RecO. The protein is Recombination protein RecR of Streptococcus equi subsp. zooepidemicus (strain MGCS10565).